The primary structure comprises 868 residues: DNA topoisomerase 1 (868 aa).

In terms of domain architecture, Toprim spans lysine 3–isoleucine 148. Mg(2+) contacts are provided by glutamate 9 and aspartate 117. One can recognise a Topo IA-type catalytic domain in the interval asparagine 164–leucine 581. Positions serine 198–glutamine 203 are interaction with DNA. Catalysis depends on tyrosine 325, which acts as the O-(5'-phospho-DNA)-tyrosine intermediate. 3 C4-type zinc fingers span residues cysteine 605–cysteine 636, cysteine 667–cysteine 694, and cysteine 716–cysteine 739.

This sequence belongs to the type IA topoisomerase family. As to quaternary structure, monomer. Requires Mg(2+) as cofactor.

The enzyme catalyses ATP-independent breakage of single-stranded DNA, followed by passage and rejoining.. Its function is as follows. Releases the supercoiling and torsional tension of DNA, which is introduced during the DNA replication and transcription, by transiently cleaving and rejoining one strand of the DNA duplex. Introduces a single-strand break via transesterification at a target site in duplex DNA. The scissile phosphodiester is attacked by the catalytic tyrosine of the enzyme, resulting in the formation of a DNA-(5'-phosphotyrosyl)-enzyme intermediate and the expulsion of a 3'-OH DNA strand. The free DNA strand then undergoes passage around the unbroken strand, thus removing DNA supercoils. Finally, in the religation step, the DNA 3'-OH attacks the covalent intermediate to expel the active-site tyrosine and restore the DNA phosphodiester backbone. This Pasteurella multocida (strain Pm70) protein is DNA topoisomerase 1.